A 338-amino-acid chain; its full sequence is Inorganic pyrophosphatase (338 aa).

Position 129 (Arg129) interacts with diphosphate. Residues Asp166, Asp171, and Asp203 each contribute to the Mg(2+) site.

It belongs to the PPase family. Component of the NURF complex composed of Caf1-55, E(bx), Nurf-38 and Iswi. Mg(2+) serves as cofactor.

It localises to the cytoplasm. Its subcellular location is the nucleus. The catalysed reaction is diphosphate + H2O = 2 phosphate + H(+). Its function is as follows. Component of NURF (nucleosome remodeling factor), a complex which catalyzes ATP-dependent nucleosome sliding and facilitates transcription of chromatin. NURF is required for homeotic gene expression, proper larval blood cell development, normal male X chromosome morphology, ecdysteroid signaling and metamorphosis. Inorganic pyrophosphatase (PPase), hydrolyzes inorganic pyrophosphate to inorganic phosphate, essential for driving critical biosynthetic reactions including transcription, replication, and DNA repair. The polypeptide is Inorganic pyrophosphatase (Nurf-38) (Drosophila melanogaster (Fruit fly)).